The primary structure comprises 156 residues: Putative pre-16S rRNA nuclease (156 aa).

The protein belongs to the YqgF nuclease family.

Its subcellular location is the cytoplasm. Its function is as follows. Could be a nuclease involved in processing of the 5'-end of pre-16S rRNA. The polypeptide is Putative pre-16S rRNA nuclease (Rickettsia typhi (strain ATCC VR-144 / Wilmington)).